A 128-amino-acid chain; its full sequence is NADH-quinone oxidoreductase subunit A (128 aa).

3 consecutive transmembrane segments (helical) span residues 5–25, 72–92, and 100–120; these read IPIL…VVIA, LTAM…PWAV, and FALV…AYVW.

This sequence belongs to the complex I subunit 3 family. NDH-1 is composed of 14 different subunits. Subunits NuoA, H, J, K, L, M, N constitute the membrane sector of the complex.

The protein localises to the cell membrane. It catalyses the reaction a quinone + NADH + 5 H(+)(in) = a quinol + NAD(+) + 4 H(+)(out). NDH-1 shuttles electrons from NADH, via FMN and iron-sulfur (Fe-S) centers, to quinones in the respiratory chain. The immediate electron acceptor for the enzyme in this species is believed to be a menaquinone. Couples the redox reaction to proton translocation (for every two electrons transferred, four hydrogen ions are translocated across the cytoplasmic membrane), and thus conserves the redox energy in a proton gradient. This Mycobacterium bovis (strain ATCC BAA-935 / AF2122/97) protein is NADH-quinone oxidoreductase subunit A.